Here is a 370-residue protein sequence, read N- to C-terminus: Ig heavy chain C region (370 aa).

3 Ig-like domains span residues 40 to 134 (PTVI…RNIT), 145 to 237 (PAIK…DSIH), and 247 to 347 (PSVS…RTVN). 6 N-linked (GlcNAc...) asparagine glycosylation sites follow: Asn98, Asn132, Asn177, Asn343, Asn347, and Asn357.

The polypeptide is Ig heavy chain C region (Heterodontus francisci (Horn shark)).